The following is a 75-amino-acid chain: Small ribosomal subunit protein bS16 (75 aa).

Belongs to the bacterial ribosomal protein bS16 family.

This chain is Small ribosomal subunit protein bS16, found in Helicobacter pylori (strain G27).